The chain runs to 205 residues: Small ribosomal subunit protein uS4B (205 aa).

The S4 RNA-binding domain occupies R94 to L157.

The protein belongs to the universal ribosomal protein uS4 family. Part of the 30S ribosomal subunit. Contacts protein S5. The interaction surface between S4 and S5 is involved in control of translational fidelity.

Functionally, one of the primary rRNA binding proteins, it binds directly to 16S rRNA where it nucleates assembly of the body of the 30S subunit. In terms of biological role, with S5 and S12 plays an important role in translational accuracy. The polypeptide is Small ribosomal subunit protein uS4B (Nitrosomonas europaea (strain ATCC 19718 / CIP 103999 / KCTC 2705 / NBRC 14298)).